A 662-amino-acid chain; its full sequence is DNA ligase (662 aa).

NAD(+) contacts are provided by residues 31-35 and 79-80; these read DKDYD and SL. K121 serves as the catalytic N6-AMP-lysine intermediate. Residues R143, E177, and K313 each contribute to the NAD(+) site. Zn(2+) is bound by residues C406, C409, C422, and C428. The 77-residue stretch at 586–662 folds into the BRCT domain; the sequence is VLESPFMGKT…LSEEEFENMI (77 aa).

The protein belongs to the NAD-dependent DNA ligase family. LigA subfamily. The cofactor is Mg(2+). Requires Mn(2+) as cofactor.

The catalysed reaction is NAD(+) + (deoxyribonucleotide)n-3'-hydroxyl + 5'-phospho-(deoxyribonucleotide)m = (deoxyribonucleotide)n+m + AMP + beta-nicotinamide D-nucleotide.. Functionally, DNA ligase that catalyzes the formation of phosphodiester linkages between 5'-phosphoryl and 3'-hydroxyl groups in double-stranded DNA using NAD as a coenzyme and as the energy source for the reaction. It is essential for DNA replication and repair of damaged DNA. The polypeptide is DNA ligase (Clostridium perfringens (strain 13 / Type A)).